Here is a 274-residue protein sequence, read N- to C-terminus: CTO1 family protein C17G9.12c (274 aa).

The protein belongs to the CTO1 family.

The protein localises to the cytoplasm. The protein resides in the nucleus. In Schizosaccharomyces pombe (strain 972 / ATCC 24843) (Fission yeast), this protein is CTO1 family protein C17G9.12c.